The following is a 313-amino-acid chain: MGNEFQHRTVLLDEAVDALVTRPDGVYVDGTFGRGGHSRAVLARLGYAGRLIAFDKDPRAIETAESIEDARFEIVHDSFAAMKGALDARGIGRVSGVLLDLGVSSPQVDDPARGFSFRANGPLDMRMDPTRGESAAEWLARASVQELTEVIRDYGEERFAFQIAKAIVARRAESDRLGPLDSTGELAQIVGHVVKTREKGKDPATRTFQAIRIHVNQELADLQVVLEAALSLLEQGGRLVVISFHSLEDRIVKRFLQAHASAPAVDRRLPIRAADLPRPPLKLLGRMFPNDAEVAANPRARSAVMRIAERVAP.

S-adenosyl-L-methionine contacts are provided by residues G35–H37, D55, F79, D100, and Q107.

It belongs to the methyltransferase superfamily. RsmH family.

It is found in the cytoplasm. It catalyses the reaction cytidine(1402) in 16S rRNA + S-adenosyl-L-methionine = N(4)-methylcytidine(1402) in 16S rRNA + S-adenosyl-L-homocysteine + H(+). Functionally, specifically methylates the N4 position of cytidine in position 1402 (C1402) of 16S rRNA. The protein is Ribosomal RNA small subunit methyltransferase H of Burkholderia pseudomallei (strain K96243).